We begin with the raw amino-acid sequence, 394 residues long: NAD(P)H-quinone oxidoreductase subunit H 2 (394 aa).

It belongs to the complex I 49 kDa subunit family. As to quaternary structure, NDH-1 can be composed of about 15 different subunits; different subcomplexes with different compositions have been identified which probably have different functions.

The protein resides in the cell inner membrane. It carries out the reaction a plastoquinone + NADH + (n+1) H(+)(in) = a plastoquinol + NAD(+) + n H(+)(out). The catalysed reaction is a plastoquinone + NADPH + (n+1) H(+)(in) = a plastoquinol + NADP(+) + n H(+)(out). In terms of biological role, NDH-1 shuttles electrons from an unknown electron donor, via FMN and iron-sulfur (Fe-S) centers, to quinones in the respiratory and/or the photosynthetic chain. The immediate electron acceptor for the enzyme in this species is believed to be plastoquinone. Couples the redox reaction to proton translocation, and thus conserves the redox energy in a proton gradient. Cyanobacterial NDH-1 also plays a role in inorganic carbon-concentration. The chain is NAD(P)H-quinone oxidoreductase subunit H 2 from Gloeobacter violaceus (strain ATCC 29082 / PCC 7421).